The chain runs to 240 residues: Histidinol dehydrogenase homolog oryD (240 aa).

2 residues coordinate Zn(2+): glutamine 64 and histidine 67. Glutamate 134 (proton acceptor) is an active-site residue. 2 residues coordinate Zn(2+): aspartate 168 and histidine 228.

The protein belongs to the histidinol dehydrogenase family. It depends on Zn(2+) as a cofactor.

The protein operates within secondary metabolite biosynthesis. Its function is as follows. Histidinol dehydrogenase homolog; part of the gene cluster that mediates the biosynthesis of oryzines, natural products with an unusual maleidride backbone. The two subunits of the fungal fatty acid synthase oryfasA and oryfasB probably form octenoic acid. This fatty acid is most likely activated by the acyl-CoA ligase oryP to give octenyl-CoA before the citrate synthase-like protein oryE catalyzes condensation with oxaloacetate to form tricarboxylic acid. The next steps of the pathways are conjectural, but a favorite possible route has been proposed, beginning with decarboxylation and concomitant dehydration by the decarboxylase oryM, followed by tautomerization, which may lead to the production of a diene intermediate. Reduction of this diene intermediate could give the known metabolite piliformic acid. On the pathway to oryzine B and oryzine A, however, hydroxylation of the diene by the alpha-ketoglutarate-dependent dioxygenase oryG and lactonisation by the lactonohydrolases oryH or oryL could give oryzine B directly. Finally, enoyl reduction by the dehydrogenase oryD would then convert oryzine B into oryzine A. This Aspergillus oryzae (strain ATCC 42149 / RIB 40) (Yellow koji mold) protein is Histidinol dehydrogenase homolog oryD.